Here is a 298-residue protein sequence, read N- to C-terminus: Phosphatidylglycerol--prolipoprotein diacylglyceryl transferase (298 aa).

7 helical membrane passes run L17–G37, M59–Y79, G97–W117, F129–G149, S204–A224, M230–F250, and F257–L277. R142 is a binding site for a 1,2-diacyl-sn-glycero-3-phospho-(1'-sn-glycerol).

It belongs to the Lgt family.

It localises to the cell inner membrane. It carries out the reaction L-cysteinyl-[prolipoprotein] + a 1,2-diacyl-sn-glycero-3-phospho-(1'-sn-glycerol) = an S-1,2-diacyl-sn-glyceryl-L-cysteinyl-[prolipoprotein] + sn-glycerol 1-phosphate + H(+). It participates in protein modification; lipoprotein biosynthesis (diacylglyceryl transfer). In terms of biological role, catalyzes the transfer of the diacylglyceryl group from phosphatidylglycerol to the sulfhydryl group of the N-terminal cysteine of a prolipoprotein, the first step in the formation of mature lipoproteins. In Burkholderia orbicola (strain MC0-3), this protein is Phosphatidylglycerol--prolipoprotein diacylglyceryl transferase.